The following is a 243-amino-acid chain: MTTPTTLSGAILDPMLRADPVGPRITYYDDATGERIELSAVTLANWAAKTGNLLRDELAAGPASRVAILLPAHWQTAAVLFGVWWIGAQAILDDSPADVALCTADRLAEADAVVNSAAVAGEVAVLSLDPFGRPATGLPVGVTDYATAVRVHGDQIVPEHNPGPVLAGRSVEQILRDCAASAAARGLTAADRVLSTASWAGPDELVDGLLAILAAGASLVQVANPDPAMLQRRIATEKVTRVL.

It belongs to the TIGR03089 family.

This Mycobacterium tuberculosis (strain ATCC 25618 / H37Rv) protein is TIGR03089 family protein.